The sequence spans 563 residues: Sulfite reductase [NADPH] hemoprotein beta-component (563 aa).

4 residues coordinate [4Fe-4S] cluster: cysteine 426, cysteine 432, cysteine 472, and cysteine 476. Cysteine 476 is a binding site for siroheme.

The protein belongs to the nitrite and sulfite reductase 4Fe-4S domain family. As to quaternary structure, alpha(8)-beta(8). The alpha component is a flavoprotein, the beta component is a hemoprotein. The cofactor is siroheme. Requires [4Fe-4S] cluster as cofactor.

The enzyme catalyses hydrogen sulfide + 3 NADP(+) + 3 H2O = sulfite + 3 NADPH + 4 H(+). It participates in sulfur metabolism; hydrogen sulfide biosynthesis; hydrogen sulfide from sulfite (NADPH route): step 1/1. In terms of biological role, component of the sulfite reductase complex that catalyzes the 6-electron reduction of sulfite to sulfide. This is one of several activities required for the biosynthesis of L-cysteine from sulfate. The protein is Sulfite reductase [NADPH] hemoprotein beta-component of Photobacterium profundum (strain SS9).